The chain runs to 146 residues: Hemoglobin subunit beta-1 (146 aa).

The Globin domain maps to 2-146; that stretch reads HWTAEEKHLL…VAHALARRYH (145 aa). Heme b contacts are provided by H63 and H92.

This sequence belongs to the globin family. In terms of assembly, there are three forms of hemoglobin in Sphenodon: A, A' and D. Hb A is a tetramer of two alpha-A and two beta-1, Hb A' is a tetramer of two alpha-a and two beta-2, Hb D is a tetramer of two alpha-D and two beta-2.

Its function is as follows. Involved in oxygen transport from the lung to the various peripheral tissues. The protein is Hemoglobin subunit beta-1 (HBB1) of Sphenodon punctatus (Tuatara).